A 118-amino-acid chain; its full sequence is MSRVKRGVTAHARHRKIIKKAKGYYGRRKNAFRTANQAVEKAGQYAYRDRRTRKRNFRALWIQRINAGVREHGLTYSRFIDGLAKAGIEVDRKVLSDIAIHEPEAFKALVEQAQAALK.

The protein belongs to the bacterial ribosomal protein bL20 family.

Binds directly to 23S ribosomal RNA and is necessary for the in vitro assembly process of the 50S ribosomal subunit. It is not involved in the protein synthesizing functions of that subunit. The protein is Large ribosomal subunit protein bL20 of Parvibaculum lavamentivorans (strain DS-1 / DSM 13023 / NCIMB 13966).